We begin with the raw amino-acid sequence, 303 residues long: Secreted mono- and diacylglycerol lipase LIP4 (303 aa).

The N-terminal stretch at Met-1–Cys-16 is a signal peptide. The cysteines at positions 54 and 293 are disulfide-linked. Ser-167 functions as the Nucleophile in the catalytic mechanism. Asp-224 is an active-site residue.

The protein belongs to the AB hydrolase superfamily. Lipase family. Class 3 subfamily.

The protein resides in the secreted. The catalysed reaction is a monoacylglycerol + H2O = glycerol + a fatty acid + H(+). It catalyses the reaction a diacylglycerol + H2O = a monoacylglycerol + a fatty acid + H(+). Its function is as follows. Secreted lipase involved in Dandruff and seborrheic dermatitis (D/SD) probably via lipase-mediated breakdown of sebaceous lipids and release of irritating free fatty acids. Shows activity against monoglyceride and diglyceride substrates. Due to an absence of fatty acid synthase genes in Malassezia species, secretory lipases are essential for the yeast to generate free fatty acids from degradation of sebum and assimilate them as lipid sources for growth. Plays an essential role at the pathogen-host interface during disease progression. This is Secreted mono- and diacylglycerol lipase LIP4 from Malassezia restricta (strain ATCC 96810 / NBRC 103918 / CBS 7877) (Seborrheic dermatitis infection agent).